A 139-amino-acid polypeptide reads, in one-letter code: Trafficking protein particle complex subunit 2-like protein (139 aa).

Belongs to the TRAPP small subunits family. Sedlin subfamily.

The protein resides in the cytoplasm. It is found in the perinuclear region. It localises to the endoplasmic reticulum. Its subcellular location is the golgi apparatus. May play a role in vesicular transport from endoplasmic reticulum to Golgi. The protein is Trafficking protein particle complex subunit 2-like protein (trappc2l) of Xenopus tropicalis (Western clawed frog).